The following is a 665-amino-acid chain: Phosphatidylinositol-3-phosphate phosphatase MTMR1 (665 aa).

At methionine 1 the chain carries N-acetylmethionine. A compositionally biased stretch (low complexity) spans 1 to 11; it reads MDRPAAAAAAG. The segment at 1 to 51 is disordered; the sequence is MDRPAAAAAAGCEGGGGPNPGPAGGRRPPRAAGGATAGSRQPSVETLDSPT. Over residues 12 to 24 the composition is skewed to gly residues; sequence CEGGGGPNPGPAG. Polar residues predominate over residues 39 to 51; the sequence is SRQPSVETLDSPT. A phosphoserine mark is found at serine 43 and serine 49. The GRAM domain occupies 90–161; that stretch reads NKLAQMEEAP…GVISRVEKIG (72 aa). Residues 226–601 form the Myotubularin phosphatase domain; it reads GWKVYDPVSE…SHLELWVNYY (376 aa). Residues asparagine 351, asparagine 376, and isoleucine 377 each coordinate a 1,2-diacyl-sn-glycero-3-phospho-(1D-myo-inositol-3-phosphate). Cysteine 438 functions as the Phosphocysteine intermediate in the catalytic mechanism. A 1,2-diacyl-sn-glycero-3-phospho-(1D-myo-inositol-3-phosphate)-binding residues include serine 439, aspartate 440, glycine 441, tryptophan 442, aspartate 443, arginine 444, and arginine 484. Serine 439 contributes to the phosphate binding site. Phosphate contacts are provided by glycine 441, tryptophan 442, aspartate 443, and arginine 444. The segment at 608 to 665 is required for dimerization; it reads MRPQMPIHQNLKELLAVRAELQKRVEGLQREVATRAVSSSSERGSSPSHSATSVHTSV. Residues 642–665 are disordered; sequence RAVSSSSERGSSPSHSATSVHTSV. Low complexity predominate over residues 645 to 657; the sequence is SSSSERGSSPSHS.

It belongs to the protein-tyrosine phosphatase family. Non-receptor class myotubularin subfamily. Homodimer.

It localises to the cell membrane. It is found in the cytoplasm. The enzyme catalyses a 1,2-diacyl-sn-glycero-3-phospho-(1D-myo-inositol-3-phosphate) + H2O = a 1,2-diacyl-sn-glycero-3-phospho-(1D-myo-inositol) + phosphate. The catalysed reaction is 1,2-dioctanoyl-sn-glycero-3-phospho-(1-D-myo-inositol-3-phosphate) + H2O = 1,2-dioctanoyl-sn-glycero-3-phospho-(1D-myo-inositol) + phosphate. It carries out the reaction a 1,2-diacyl-sn-glycero-3-phospho-(1D-myo-inositol-3,5-bisphosphate) + H2O = a 1,2-diacyl-sn-glycero-3-phospho-(1D-myo-inositol-5-phosphate) + phosphate. Lipid phosphatase that specifically dephosphorylates the D-3 position of phosphatidylinositol 3-phosphate, generating phosphatidylinositol. Could also dephosphorylate phosphatidylinositol 3,5-bisphosphate to produce phosphatidylinositol 5-phosphate. This Homo sapiens (Human) protein is Phosphatidylinositol-3-phosphate phosphatase MTMR1.